Consider the following 572-residue polypeptide: Arginine--tRNA ligase (572 aa).

A 'HIGH' region motif is present at residues 122-132 (PNLAKEMHVGH).

The protein belongs to the class-I aminoacyl-tRNA synthetase family. In terms of assembly, monomer.

The protein resides in the cytoplasm. It catalyses the reaction tRNA(Arg) + L-arginine + ATP = L-arginyl-tRNA(Arg) + AMP + diphosphate. The sequence is that of Arginine--tRNA ligase from Neisseria meningitidis serogroup A / serotype 4A (strain DSM 15465 / Z2491).